The following is a 236-amino-acid chain: Cutinase (236 aa).

Residues 1–20 form the signal peptide; sequence MSLTLFSFLSLVSILCIVTA. A disulfide bridge connects residues C66 and C143. The Nucleophile role is filled by S154. C202 and C209 are disulfide-bonded. The active site involves D206. H218 acts as the Proton donor/acceptor in catalysis.

This sequence belongs to the cutinase family. In terms of processing, the 2 disulfide bonds play a critical role in holding the catalytic residues in juxta-position; reduction of the disulfide bridges results in the complete inactivation of the enzyme.

It localises to the secreted. It carries out the reaction cutin + H2O = cutin monomers.. Catalyzes the hydrolysis of complex carboxylic polyesters found in the cell wall of plants. Degrades cutin, a macromolecule that forms the structure of the plant cuticle. Allows pathogenic fungi to penetrate through the cuticular barrier into the host plant during the initial stage of fungal infection. The sequence is that of Cutinase (CUT1) from Blumeria hordei (Barley powdery mildew).